We begin with the raw amino-acid sequence, 226 residues long: V-type proton ATPase subunit E (226 aa).

This sequence belongs to the V-ATPase E subunit family. In terms of assembly, V-ATPase is a heteromultimeric enzyme made up of two complexes: the ATP-hydrolytic V1 complex and the proton translocation V0 complex. The V1 complex consists of three catalytic AB heterodimers that form a heterohexamer, three peripheral stalks each consisting of EG heterodimers, one central rotor including subunits D and F, and the regulatory subunits C and H. The proton translocation complex V0 consists of the proton transport subunit a, a ring of proteolipid subunits c9c'', rotary subunit d, subunits e and f, and the accessory subunits VhaAC45 and ATP6AP2.

In terms of biological role, subunit of the V1 complex of vacuolar(H+)-ATPase (V-ATPase), a multisubunit enzyme composed of a peripheral complex (V1) that hydrolyzes ATP and a membrane integral complex (V0) that translocates protons. V-ATPase is responsible for acidifying and maintaining the pH of intracellular compartments and in some cell types, is targeted to the plasma membrane, where it is responsible for acidifying the extracellular environment. The polypeptide is V-type proton ATPase subunit E (Vha26) (Drosophila melanogaster (Fruit fly)).